A 128-amino-acid polypeptide reads, in one-letter code: Small ribosomal subunit protein eS8 (128 aa).

This sequence belongs to the eukaryotic ribosomal protein eS8 family. As to quaternary structure, part of the 30S ribosomal subunit.

The polypeptide is Small ribosomal subunit protein eS8 (Methanococcus vannielii (strain ATCC 35089 / DSM 1224 / JCM 13029 / OCM 148 / SB)).